We begin with the raw amino-acid sequence, 149 residues long: Alpha-crystallin A chain (149 aa).

The sHSP domain maps to 41-149 (LFRSVLESGI…DPSHSERPIP (109 aa)). The Zn(2+) site is built by His-89, Glu-91, His-96, and His-143.

This sequence belongs to the small heat shock protein (HSP20) family. In terms of assembly, heteropolymer composed of three CRYAA and one CRYAB subunits. Inter-subunit bridging via zinc ions enhances stability, which is crucial as there is no protein turn over in the lens. Can also form homodimers and homotetramers (dimers of dimers) which serve as the building blocks of homooligomers. Within homooligomers, the zinc-binding motif is created from residues of 3 different molecules. His-89 and Glu-91 from one molecule are ligands of the zinc ion, and His-96 and His-143 residues from additional molecules complete the site with tetrahedral coordination geometry.

The protein localises to the cytoplasm. The protein resides in the nucleus. Its function is as follows. Contributes to the transparency and refractive index of the lens. May act as a chaperone, preventing aggregation of various proteins under a wide range of stress conditions. The protein is Alpha-crystallin A chain (CRYAA) of Eudromia elegans (Elegant crested-tinamou).